Reading from the N-terminus, the 1399-residue chain is MKDLLNLLKNQGQVEEFDAIRIGLASPEMIRSWSFGEVKKPETINYRTFKPERDGLFCAKIFGPVKDYECLCGKYKRLKHRGVICEKCGVEVALAKVRRERMAHIELASPVAHIWFLKSLPSRIGLLMDMTLRDIERVLYFESYVVIDPGMTTLEKGQLLNDEQYFEALEEFGDDFDARMGAEAVRELLHAIDLEHEIGRLREEIPQTNSETKIKKLSKRLKLMEAFQGSGNLPEWMVLTVLPVLPPDLRPLVPLDGGRFATSDLNDLYRRVINRNNRLKRLLDLSAPDIIVRNEKRMLQEAVDALLDNGRRGRAITGSNKRPLKSLADMIKGKQGRFRQNLLGKRVDYSGRSVITVGPTLRLHQCGLPKKMALELFKPFIFGKLEMRGLATTIKAAKKMVERELPEVWDVLAEVIREHPVLLNRAPTLHRLGIQAFEPVLIEGKAIQLHPLVCAAYNADFDGDQMAVHVPLTLEAQLEARALMMSTNNILSPANGEPIIVPSQDVVLGLYYMTREAINAKGEGRVFADLQEVDRVFRAGEAALHAKIKVRINETVNDRDGNSVNNTRIVDTTVGRALLFQVVPKGLSFDVVNLPMKKKAISKLINQCYRVVGLKETVIFADQLMYTGFAYSTISGVSIGVNDFVIPDEKARIIGAATDEVKEIESQYASGLVTQGEKYNKVIDLWSKANDEVSKAMMANLSKEKVIDRHGDEVEQESFNSMYMMADSGARGSAAQIRQLAGMRGLMAKPDGSIIETPITANFREGLSVLQYFISTHGARKGLADTALKTANSGYLTRRLVDVAQDLVVTEIDCGTEHGLLMTPHIEGGDVVEPLGERVLGRVIARDVFKPGTEDVIVPAGTLVDEKWVEFIELNSIDEVIVRSPISCETRYGICAKCYGRDLARGHQVNIGEAVGVIAAQSIGEPGTQLTMRTFHIGGAASRTSAADSVQVKNGGTVRLHNLKHVERVDGNLVAVSRSGELAIADDFGRERERYKLPYGAVISVKEGDKVDAGAIVAKWDPHTHPIVTEMKGTVTYVGMEEGITIKRQTDELTGMTNIEVLDAKDRPAAGKDIRPAVKMVDDNGKDLLLPGTDVIAQYFLPANALVGVADGAKIAIGDVIARIPQETSKTRDITGGLPRVADLFEARRPKEASILAEVSGTIAFGKETKGKRRLVITPNDGSDPYEELIPKWRHLNVFEGEQVNRGEVISDGPSDPHDILRLLGVSALAKYIVNEIQDVYRLQGVKINDKHIETILRQMLRKVEISESGDSSFIKGDQMELTHVLVENERLNAEDKFVSKFTRVLLGITKASLSTESFISAASFQETTRVLTEAAVTGKRDYLRGLKENVVVGRLIPAGTGLAYHSERKRRRDADKPLRVSASEVEAALTEALNSSGN.

Zn(2+) is bound by residues Cys-70, Cys-72, Cys-85, and Cys-88. The Mg(2+) site is built by Asp-460, Asp-462, and Asp-464. Cys-814, Cys-888, Cys-895, and Cys-898 together coordinate Zn(2+).

The protein belongs to the RNA polymerase beta' chain family. As to quaternary structure, the RNAP catalytic core consists of 2 alpha, 1 beta, 1 beta' and 1 omega subunit. When a sigma factor is associated with the core the holoenzyme is formed, which can initiate transcription. It depends on Mg(2+) as a cofactor. Zn(2+) is required as a cofactor.

It catalyses the reaction RNA(n) + a ribonucleoside 5'-triphosphate = RNA(n+1) + diphosphate. In terms of biological role, DNA-dependent RNA polymerase catalyzes the transcription of DNA into RNA using the four ribonucleoside triphosphates as substrates. In Pseudomonas fluorescens (strain Pf0-1), this protein is DNA-directed RNA polymerase subunit beta'.